The primary structure comprises 291 residues: 33 kDa chaperonin (291 aa).

2 disulfides stabilise this stretch: Cys-229–Cys-231 and Cys-262–Cys-265.

Belongs to the HSP33 family. Post-translationally, under oxidizing conditions two disulfide bonds are formed involving the reactive cysteines. Under reducing conditions zinc is bound to the reactive cysteines and the protein is inactive.

The protein localises to the cytoplasm. Functionally, redox regulated molecular chaperone. Protects both thermally unfolding and oxidatively damaged proteins from irreversible aggregation. Plays an important role in the bacterial defense system toward oxidative stress. In Vibrio parahaemolyticus serotype O3:K6 (strain RIMD 2210633), this protein is 33 kDa chaperonin.